A 133-amino-acid polypeptide reads, in one-letter code: S-adenosylmethionine decarboxylase proenzyme (133 aa).

Catalysis depends on Ser63, which acts as the Schiff-base intermediate with substrate; via pyruvic acid. Ser63 carries the post-translational modification Pyruvic acid (Ser); by autocatalysis. His68 functions as the Proton acceptor; for processing activity in the catalytic mechanism. Catalysis depends on Cys83, which acts as the Proton donor; for catalytic activity.

Belongs to the prokaryotic AdoMetDC family. Type 1 subfamily. Heterotetramer of two alpha and two beta chains arranged as a dimer of alpha/beta heterodimers. Pyruvate is required as a cofactor. Post-translationally, is synthesized initially as an inactive proenzyme. Formation of the active enzyme involves a self-maturation process in which the active site pyruvoyl group is generated from an internal serine residue via an autocatalytic post-translational modification. Two non-identical subunits are generated from the proenzyme in this reaction, and the pyruvate is formed at the N-terminus of the alpha chain, which is derived from the carboxyl end of the proenzyme. The post-translation cleavage follows an unusual pathway, termed non-hydrolytic serinolysis, in which the side chain hydroxyl group of the serine supplies its oxygen atom to form the C-terminus of the beta chain, while the remainder of the serine residue undergoes an oxidative deamination to produce ammonia and the pyruvoyl group blocking the N-terminus of the alpha chain.

It catalyses the reaction S-adenosyl-L-methionine + H(+) = S-adenosyl 3-(methylsulfanyl)propylamine + CO2. It functions in the pathway amine and polyamine biosynthesis; S-adenosylmethioninamine biosynthesis; S-adenosylmethioninamine from S-adenosyl-L-methionine: step 1/1. Functionally, catalyzes the decarboxylation of S-adenosylmethionine to S-adenosylmethioninamine (dcAdoMet), the propylamine donor required for the synthesis of the polyamines spermine and spermidine from the diamine putrescine. This is S-adenosylmethionine decarboxylase proenzyme from Acidithiobacillus ferrooxidans (strain ATCC 23270 / DSM 14882 / CIP 104768 / NCIMB 8455) (Ferrobacillus ferrooxidans (strain ATCC 23270)).